Consider the following 353-residue polypeptide: Photosystem II D2 protein (353 aa).

At T2 the chain carries N-acetylthreonine. T2 is subject to Phosphothreonine. The chain crosses the membrane as a helical span at residues 41–61; the sequence is CAYFALGGWFTGTTFVTSWYT. H118 is a binding site for chlorophyll a. Residues 125 to 141 form a helical membrane-spanning segment; sequence GFMLRQFELARSVQLRP. Q130 and N143 together coordinate pheophytin a. A helical transmembrane segment spans residues 153–166; sequence VFVSVFLIYPLGQS. Position 198 (H198) interacts with chlorophyll a. The helical transmembrane segment at 208–228 threads the bilayer; sequence AALLCAIHGATVENTLFEDGD. Residues H215 and F262 each coordinate a plastoquinone. Residue H215 participates in Fe cation binding. Residue H269 participates in Fe cation binding. The chain crosses the membrane as a helical span at residues 279-295; sequence GLWMSALGVVGLALNLR.

Belongs to the reaction center PufL/M/PsbA/D family. In terms of assembly, PSII is composed of 1 copy each of membrane proteins PsbA, PsbB, PsbC, PsbD, PsbE, PsbF, PsbH, PsbI, PsbJ, PsbK, PsbL, PsbM, PsbT, PsbX, PsbY, PsbZ, Psb30/Ycf12, at least 3 peripheral proteins of the oxygen-evolving complex and a large number of cofactors. It forms dimeric complexes. The D1/D2 heterodimer binds P680, chlorophylls that are the primary electron donor of PSII, and subsequent electron acceptors. It shares a non-heme iron and each subunit binds pheophytin, quinone, additional chlorophylls, carotenoids and lipids. There is also a Cl(-1) ion associated with D1 and D2, which is required for oxygen evolution. The PSII complex binds additional chlorophylls, carotenoids and specific lipids. is required as a cofactor.

The protein resides in the plastid. It localises to the chloroplast thylakoid membrane. It catalyses the reaction 2 a plastoquinone + 4 hnu + 2 H2O = 2 a plastoquinol + O2. Functionally, photosystem II (PSII) is a light-driven water:plastoquinone oxidoreductase that uses light energy to abstract electrons from H(2)O, generating O(2) and a proton gradient subsequently used for ATP formation. It consists of a core antenna complex that captures photons, and an electron transfer chain that converts photonic excitation into a charge separation. The D1/D2 (PsbA/PsbD) reaction center heterodimer binds P680, the primary electron donor of PSII as well as several subsequent electron acceptors. D2 is needed for assembly of a stable PSII complex. This is Photosystem II D2 protein from Aethionema grandiflorum (Persian stone-cress).